Here is a 386-residue protein sequence, read N- to C-terminus: Branched-chain-amino-acid aminotransferase, cytosolic (386 aa).

Met-1 is modified (N-acetylmethionine). Residue Lys-222 is modified to N6-(pyridoxal phosphate)lysine.

The protein belongs to the class-IV pyridoxal-phosphate-dependent aminotransferase family. As to quaternary structure, homodimer. Pyridoxal 5'-phosphate serves as cofactor. As to expression, expressed in brain and kidney. Overexpressed in MYC-induced brain tumors, lymphomas, as well as in a teratocarcinoma cell line.

It is found in the cytoplasm. The enzyme catalyses L-leucine + 2-oxoglutarate = 4-methyl-2-oxopentanoate + L-glutamate. It carries out the reaction L-isoleucine + 2-oxoglutarate = (S)-3-methyl-2-oxopentanoate + L-glutamate. The catalysed reaction is L-valine + 2-oxoglutarate = 3-methyl-2-oxobutanoate + L-glutamate. Catalyzes the first reaction in the catabolism of the essential branched chain amino acids leucine, isoleucine, and valine. This Mus musculus (Mouse) protein is Branched-chain-amino-acid aminotransferase, cytosolic (Bcat1).